The sequence spans 427 residues: Enolase (427 aa).

Glutamine 163 provides a ligand contact to (2R)-2-phosphoglycerate. The active-site Proton donor is the glutamate 205. 3 residues coordinate Mg(2+): aspartate 242, glutamate 285, and aspartate 312. (2R)-2-phosphoglycerate-binding residues include lysine 337, arginine 366, serine 367, and lysine 388. The Proton acceptor role is filled by lysine 337.

It belongs to the enolase family. Mg(2+) is required as a cofactor.

The protein resides in the cytoplasm. Its subcellular location is the secreted. It localises to the cell surface. The catalysed reaction is (2R)-2-phosphoglycerate = phosphoenolpyruvate + H2O. The protein operates within carbohydrate degradation; glycolysis; pyruvate from D-glyceraldehyde 3-phosphate: step 4/5. Functionally, catalyzes the reversible conversion of 2-phosphoglycerate (2-PG) into phosphoenolpyruvate (PEP). It is essential for the degradation of carbohydrates via glycolysis. This is Enolase from Rhodopseudomonas palustris (strain BisB5).